Reading from the N-terminus, the 404-residue chain is Tryptophan synthase beta chain (404 aa).

Position 91 is an N6-(pyridoxal phosphate)lysine (K91).

Belongs to the TrpB family. As to quaternary structure, tetramer of two alpha and two beta chains. Pyridoxal 5'-phosphate is required as a cofactor.

The enzyme catalyses (1S,2R)-1-C-(indol-3-yl)glycerol 3-phosphate + L-serine = D-glyceraldehyde 3-phosphate + L-tryptophan + H2O. It participates in amino-acid biosynthesis; L-tryptophan biosynthesis; L-tryptophan from chorismate: step 5/5. Its function is as follows. The beta subunit is responsible for the synthesis of L-tryptophan from indole and L-serine. The chain is Tryptophan synthase beta chain from Clavibacter michiganensis subsp. michiganensis (strain NCPPB 382).